A 293-amino-acid polypeptide reads, in one-letter code: Elongation factor Ts (293 aa).

Residues 81–84 (TDFV) are involved in Mg(2+) ion dislocation from EF-Tu.

The protein belongs to the EF-Ts family.

The protein localises to the cytoplasm. Functionally, associates with the EF-Tu.GDP complex and induces the exchange of GDP to GTP. It remains bound to the aminoacyl-tRNA.EF-Tu.GTP complex up to the GTP hydrolysis stage on the ribosome. The polypeptide is Elongation factor Ts (Thioalkalivibrio sulfidiphilus (strain HL-EbGR7)).